Reading from the N-terminus, the 495-residue chain is UDP-N-acetylmuramoyl-L-alanyl-D-glutamate--2,6-diaminopimelate ligase (495 aa).

Residues leucine 27, serine 29, and 44 to 46 (HQT) contribute to the UDP-N-acetyl-alpha-D-muramoyl-L-alanyl-D-glutamate site. 116–122 (GTNGKTT) lines the ATP pocket. UDP-N-acetyl-alpha-D-muramoyl-L-alanyl-D-glutamate contacts are provided by residues asparagine 157, 158–159 (TT), serine 185, glutamine 191, and arginine 193. Lysine 225 is modified (N6-carboxylysine). Meso-2,6-diaminopimelate is bound by residues arginine 390, 414-417 (DNPR), glycine 465, and glutamate 469. The Meso-diaminopimelate recognition motif signature appears at 414-417 (DNPR).

The protein belongs to the MurCDEF family. MurE subfamily. The cofactor is Mg(2+). In terms of processing, carboxylation is probably crucial for Mg(2+) binding and, consequently, for the gamma-phosphate positioning of ATP.

The protein resides in the cytoplasm. It catalyses the reaction UDP-N-acetyl-alpha-D-muramoyl-L-alanyl-D-glutamate + meso-2,6-diaminopimelate + ATP = UDP-N-acetyl-alpha-D-muramoyl-L-alanyl-gamma-D-glutamyl-meso-2,6-diaminopimelate + ADP + phosphate + H(+). Its pathway is cell wall biogenesis; peptidoglycan biosynthesis. In terms of biological role, catalyzes the addition of meso-diaminopimelic acid to the nucleotide precursor UDP-N-acetylmuramoyl-L-alanyl-D-glutamate (UMAG) in the biosynthesis of bacterial cell-wall peptidoglycan. The protein is UDP-N-acetylmuramoyl-L-alanyl-D-glutamate--2,6-diaminopimelate ligase of Sodalis glossinidius (strain morsitans).